We begin with the raw amino-acid sequence, 30 residues long: GIPCGESCVYIPCTVTALAGCKCKSKVCYN.

The segment at residues 1-30 (GIPCGESCVYIPCTVTALAGCKCKSKVCYN) is a cross-link (cyclopeptide (Gly-Asn)). Cystine bridges form between Cys-4–Cys-21, Cys-8–Cys-23, and Cys-13–Cys-28.

In terms of processing, this is a cyclic peptide. Expressed in leaves, petals and petioles but not in roots and runners (at protein level).

Its function is as follows. Probably participates in a plant defense mechanism. This is Cycloviolacin-O18 from Viola odorata (Sweet violet).